The primary structure comprises 225 residues: MNGIRDVVKEEQPRERLLLEGAGSLSNRELLAVLLRTGSKEESVLKLSDKILHHFDGLRMLKDATLEELVSIHGVGVAKATQLIAAFELGRRMVRLEYQNRYSIRSPEDCATYMMEEMRFLQQEHFVCLYLNTKNQVIHRQTIFIGSLNSSIVHPREVFKEAFRRAAASIICLHNHPSGDPAPSREDIEVTKRLVECGRIIGIEVLDHIIIGDHKFVSLKEKGHI.

The MPN domain maps to 103–225; that stretch reads SIRSPEDCAT…FVSLKEKGHI (123 aa). Histidine 174, histidine 176, and aspartate 187 together coordinate Zn(2+). Positions 174–187 match the JAMM motif motif; the sequence is HNHPSGDPAPSRED.

It belongs to the UPF0758 family.

In Bacillus anthracis (strain CDC 684 / NRRL 3495), this protein is UPF0758 protein BAMEG_4721.